The sequence spans 253 residues: DNA repair protein RecO (253 aa).

This sequence belongs to the RecO family.

Functionally, involved in DNA repair and RecF pathway recombination. This Staphylococcus epidermidis (strain ATCC 35984 / DSM 28319 / BCRC 17069 / CCUG 31568 / BM 3577 / RP62A) protein is DNA repair protein RecO.